The sequence spans 257 residues: Transcriptional regulatory protein TrcR (257 aa).

The Response regulatory domain maps to 33–147 (RVLLVDDEPA…ELVARLRGLL (115 aa)). D82 is modified (4-aspartylphosphate). A DNA-binding region (ompR/PhoB-type) is located at residues 158-255 (DEALRVGDLT…VRGIGYMLRP (98 aa)).

Post-translationally, phosphorylated by TrcS.

Member of the two-component regulatory system TrcS/TrcR. Activates its own expression by binding specifically to the AT-rich sequence of the trcR promoter region. Also negatively regulates the expression of Rv1057 by binding to an AT-rich sequences within the Rv1057 upstream sequence. The TrcR-TrcS regulatory system may act as a transition regulatory system involved in adapting to an intracellular environment and transitioning from latency to reactivation. This is Transcriptional regulatory protein TrcR from Mycobacterium tuberculosis (strain ATCC 25618 / H37Rv).